The sequence spans 1528 residues: Intraflagellar transport protein 121 (1528 aa).

4 WD repeats span residues 123–170 (SNRA…GSAP), 244–285 (SSMP…SSVS), 619–667 (PSLT…SEFL), and 759–798 (PELI…REDS). The segment at 914–933 (DSGLDVTASNSSQPSTQTSQ) is disordered. Over residues 920–933 (TASNSSQPSTQTSQ) the composition is skewed to low complexity.

Its subcellular location is the cell projection. It localises to the cilium. The protein localises to the flagellum. The protein resides in the cytoplasm. It is found in the cytoskeleton. Its subcellular location is the flagellum axoneme. It localises to the flagellum basal body. In terms of biological role, component of the intraflagellar transport complex A (IFT-A) involved in flagellar assembly. In Giardia intestinalis (strain ATCC 50803 / WB clone C6) (Giardia lamblia), this protein is Intraflagellar transport protein 121.